The following is a 724-amino-acid chain: 4-alpha-glucanotransferase (724 aa).

The protein belongs to the disproportionating enzyme family.

The protein resides in the cytoplasm. The enzyme catalyses Transfers a segment of a (1-&gt;4)-alpha-D-glucan to a new position in an acceptor, which may be glucose or a (1-&gt;4)-alpha-D-glucan.. This is 4-alpha-glucanotransferase (malQ) from Mycobacterium bovis (strain ATCC BAA-935 / AF2122/97).